Here is a 365-residue protein sequence, read N- to C-terminus: Sulfate/thiosulfate import ATP-binding protein CysA (365 aa).

The 235-residue stretch at Ile3–Met237 folds into the ABC transporter domain. Gly35 to Thr42 lines the ATP pocket.

Belongs to the ABC transporter superfamily. Sulfate/tungstate importer (TC 3.A.1.6) family. In terms of assembly, the complex is composed of two ATP-binding proteins (CysA), two transmembrane proteins (CysT and CysW) and a solute-binding protein (CysP).

Its subcellular location is the cell inner membrane. It carries out the reaction sulfate(out) + ATP + H2O = sulfate(in) + ADP + phosphate + H(+). It catalyses the reaction thiosulfate(out) + ATP + H2O = thiosulfate(in) + ADP + phosphate + H(+). Part of the ABC transporter complex CysAWTP involved in sulfate/thiosulfate import. Responsible for energy coupling to the transport system. The chain is Sulfate/thiosulfate import ATP-binding protein CysA from Escherichia coli O157:H7.